Here is a 477-residue protein sequence, read N- to C-terminus: ATP synthase subunit beta (477 aa).

148–155 (GGAGVGKT) contacts ATP.

The protein belongs to the ATPase alpha/beta chains family. F-type ATPases have 2 components, CF(1) - the catalytic core - and CF(0) - the membrane proton channel. CF(1) has five subunits: alpha(3), beta(3), gamma(1), delta(1), epsilon(1). CF(0) has three main subunits: a(1), b(2) and c(9-12). The alpha and beta chains form an alternating ring which encloses part of the gamma chain. CF(1) is attached to CF(0) by a central stalk formed by the gamma and epsilon chains, while a peripheral stalk is formed by the delta and b chains.

The protein localises to the cell inner membrane. It carries out the reaction ATP + H2O + 4 H(+)(in) = ADP + phosphate + 5 H(+)(out). Produces ATP from ADP in the presence of a proton gradient across the membrane. The catalytic sites are hosted primarily by the beta subunits. The polypeptide is ATP synthase subunit beta (Psychrobacter arcticus (strain DSM 17307 / VKM B-2377 / 273-4)).